The following is an 862-amino-acid chain: DNA mismatch repair protein MutS (862 aa).

603-610 contributes to the ATP binding site; it reads GPNMSGKS.

The protein belongs to the DNA mismatch repair MutS family.

In terms of biological role, this protein is involved in the repair of mismatches in DNA. It is possible that it carries out the mismatch recognition step. This protein has a weak ATPase activity. This chain is DNA mismatch repair protein MutS, found in Bacillus velezensis (strain DSM 23117 / BGSC 10A6 / LMG 26770 / FZB42) (Bacillus amyloliquefaciens subsp. plantarum).